The primary structure comprises 274 residues: Transcription factor MYB58 (274 aa).

HTH myb-type domains follow at residues lysine 11 to leucine 63 and arginine 64 to leucine 118. 2 consecutive DNA-binding regions (H-T-H motif) follow at residues tryptophan 39–leucine 63 and tryptophan 91–leucine 114. Disordered regions lie at residues glutamate 121–lysine 160 and serine 237–histidine 274. The span at serine 263–histidine 274 shows a compositional bias: low complexity.

In terms of tissue distribution, expressed in leaves. Specifically expressed in fibers and vessels undergoing secondary wall thickening, especially in inflorescence stems.

The protein localises to the nucleus. Functionally, transcriptional activator that binds DNA to the AC cis-elements 5'-ACCTACC-3', 5'-ACCAACC-3' and 5'-ACCTAAC-3' of promoters and specifically activates lignin biosynthetic genes during secondary wall formation mediated by SND1. In Arabidopsis thaliana (Mouse-ear cress), this protein is Transcription factor MYB58.